Reading from the N-terminus, the 129-residue chain is uncharacterized protein (129 aa).

Residues 1–129 are disordered; sequence MWLWQDIQCC…HTSNGRTGDL (129 aa). Positions 87–100 are enriched in basic and acidic residues; it reads KGADTRRLPRETRP. The span at 119 to 129 shows a compositional bias: polar residues; that stretch reads PHTSNGRTGDL.

This is an uncharacterized protein from Homo sapiens (Human).